The primary structure comprises 208 residues: 3-demethoxyubiquinol 3-hydroxylase (208 aa).

Positions 57, 87, 90, 139, 171, and 174 each coordinate Fe cation.

The protein belongs to the COQ7 family. Fe cation is required as a cofactor.

Its subcellular location is the cell membrane. The enzyme catalyses a 5-methoxy-2-methyl-3-(all-trans-polyprenyl)benzene-1,4-diol + AH2 + O2 = a 3-demethylubiquinol + A + H2O. It functions in the pathway cofactor biosynthesis; ubiquinone biosynthesis. In terms of biological role, catalyzes the hydroxylation of 2-nonaprenyl-3-methyl-6-methoxy-1,4-benzoquinol during ubiquinone biosynthesis. The sequence is that of 3-demethoxyubiquinol 3-hydroxylase from Burkholderia mallei (strain NCTC 10229).